We begin with the raw amino-acid sequence, 282 residues long: Nicotianamine synthase-like 5 protein (282 aa).

The protein belongs to the nicotianamine synthase (NAS)-like family.

The chain is Nicotianamine synthase-like 5 protein (NAS5) from Hordeum vulgare (Barley).